Consider the following 520-residue polypeptide: Cytochrome P450 monooxygenase TRI4 (520 aa).

A helical membrane pass occupies residues 10 to 30 (LVNIPISHAVGVVAASTVIYF). Residue asparagine 447 is glycosylated (N-linked (GlcNAc...) asparagine). Cysteine 455 serves as a coordination point for heme.

This sequence belongs to the cytochrome P450 family. The cofactor is heme.

The protein resides in the membrane. It functions in the pathway sesquiterpene biosynthesis; trichothecene biosynthesis. Cytochrome P450 monooxygenase; part of the core gene cluster that mediates the biosynthesis of trichothecenes, a very large family of chemically related bicyclic sesquiterpene compounds acting as mycotoxins, including T2-toxin. The biosynthesis of trichothecenes begins with the cyclization of farnesyl diphosphate to trichodiene and is catalyzed by the trichodiene synthase TRI5. Trichodiene undergoes a series of oxygenations catalyzed by the cytochrome P450 monooxygenase TRI4. TRI4 controls the addition of four oxygens at C-2, C-3, C-11, and the C-12, C-13-epoxide to form the intermediate isotrichotriol. Isotrichotriol then undergoes a non-enzymatic isomerization and cyclization to form isotrichodermol. During this process, the oxygen at the C-2 position becomes the pyran ring oxygen and the hydroxyl group at C-11 is lost. More complex type A trichothecenes are built by modifying isotrichodermol through a series of paired hydroxylation and acetylation or acylation steps. Isotrichodermol is converted to isotrichodermin by the acetyltransferase TRI101. TRI101 encodes a C-3 transacetylase that acts as a self-protection or resistance factor during biosynthesis and that the presence of a free C-3 hydroxyl group is a key component of Fusarium trichothecene phytotoxicity. A second hydroxyl group is added to C-15 by the trichothecene C-15 hydroxylase TRI11, producing 15-decalonectrin, which is then acetylated by TRI3, producing calonectrin. A third hydroxyl group is added at C-4 by the cytochrome P450 monooxygenase TRI13, converting calonectrin to 3,15-diacetoxyspirpenol, which is subsequently acetylated by the acetyltransferase TRI7. A fourth hydroxyl group is added to C-8 by the cytochrome P450 monooxygenase TRI1, followed by the addition of an isovaleryl moiety by TRI16. Finally, the acetyl group is removed from the C-3 position by the trichothecene C-3 esterase TRI8 to produce T-2 toxin. This chain is Cytochrome P450 monooxygenase TRI4, found in Fusarium sporotrichioides.